The chain runs to 557 residues: 6-phosphofructo-2-kinase/fructose-2,6-bisphosphatase 2 (557 aa).

Residues 1–16 are compositionally biased toward low complexity; it reads MSENSTFSTEDSSSSS. A disordered region spans residues 1-21; the sequence is MSENSTFSTEDSSSSSYKPHA. Serine 2 carries the post-translational modification N-acetylserine. Residues 2–251 are 6-phosphofructo-2-kinase; that stretch reads SENSTFSTED…VYYLMNIHVH (250 aa). The residue at position 32 (serine 32) is a Phosphoserine; by PKA. 48–56 contributes to the ATP binding site; the sequence is GLPARGKTY. Arginine 81 and arginine 105 together coordinate beta-D-fructose 6-phosphate. Aspartate 131 is an active-site residue. Beta-D-fructose 6-phosphate contacts are provided by threonine 133 and arginine 139. Cysteine 161 is a catalytic residue. 170–175 provides a ligand contact to ATP; the sequence is NILEVK. Residues lysine 175, arginine 196, and tyrosine 200 each coordinate beta-D-fructose 6-phosphate. A fructose-2,6-bisphosphatase region spans residues 252-557; that stretch reads PRTIYLCRHG…PSMASLTLLS (306 aa). Arginine 259 is a binding site for beta-D-fructose 2,6-bisphosphate. Histidine 260 (tele-phosphohistidine intermediate) is an active-site residue. 2 residues coordinate beta-D-fructose 2,6-bisphosphate: asparagine 266 and glycine 272. Glutamate 329 (proton donor/acceptor) is an active-site residue. Positions 340, 354, 358, 369, 395, and 399 each coordinate beta-D-fructose 2,6-bisphosphate. An ATP-binding site is contributed by 351-354; that stretch reads FALR. ATP contacts are provided by residues 395-399 and tyrosine 431; that span reads QAVMR. The disordered stretch occupies residues 449–495; it reads RDKPTHNFPKSQTPVRMRRNSFTPLSSSNTIRRPRNYSVGSRPLKPL. Polar residues predominate over residues 456 to 479; that stretch reads FPKSQTPVRMRRNSFTPLSSSNTI. A Phosphoserine modification is found at serine 469. A Phosphothreonine modification is found at threonine 471. The residue at position 478 (threonine 478) is a Phosphothreonine; by PKC. Phosphoserine occurs at positions 486 and 496.

In the C-terminal section; belongs to the phosphoglycerate mutase family. In terms of assembly, homodimer. Forms a heterodimer with PFKFB3. Post-translationally, phosphorylation by AMPK stimulates activity.

The enzyme catalyses beta-D-fructose 2,6-bisphosphate + H2O = beta-D-fructose 6-phosphate + phosphate. It catalyses the reaction beta-D-fructose 6-phosphate + ATP = beta-D-fructose 2,6-bisphosphate + ADP + H(+). With respect to regulation, phosphorylation results in the activation of the kinase activity. Synthesis and degradation of fructose 2,6-bisphosphate. This chain is 6-phosphofructo-2-kinase/fructose-2,6-bisphosphatase 2 (Pfkfb2), found in Rattus norvegicus (Rat).